A 273-amino-acid chain; its full sequence is NH(3)-dependent NAD(+) synthetase (273 aa).

Gly46–Ser53 provides a ligand contact to ATP. Asp52 lines the Mg(2+) pocket. Arg139 is a deamido-NAD(+) binding site. Thr159 provides a ligand contact to ATP. Glu164 contacts Mg(2+). Lys172 and Asp179 together coordinate deamido-NAD(+). Residues Lys188 and Thr210 each coordinate ATP. Residue His259–Lys260 participates in deamido-NAD(+) binding.

This sequence belongs to the NAD synthetase family. In terms of assembly, homodimer.

The catalysed reaction is deamido-NAD(+) + NH4(+) + ATP = AMP + diphosphate + NAD(+) + H(+). It participates in cofactor biosynthesis; NAD(+) biosynthesis; NAD(+) from deamido-NAD(+) (ammonia route): step 1/1. Its function is as follows. Catalyzes the ATP-dependent amidation of deamido-NAD to form NAD. Uses ammonia as a nitrogen source. The chain is NH(3)-dependent NAD(+) synthetase from Streptococcus thermophilus (strain ATCC BAA-250 / LMG 18311).